A 1063-amino-acid polypeptide reads, in one-letter code: E3 ubiquitin-protein ligase PDZRN3 (1063 aa).

The RING-type; degenerate zinc finger occupies 18–56 (CALCHKVLEDPLTTPCGHVFCAGCVLPWVVQEGSCPARC). The segment at 100 to 158 (EHLERCDFAPARCRHAGCGQLLLRRDVEAHMRDACDARPVGRCQEGCGLPLTHGEQRAG) adopts a TRAF-type zinc-finger fold. PDZ domains lie at 249–339 (TLVL…LRRT) and 419–503 (EVGL…IARP). S427 is subject to Phosphoserine. A disordered region spans residues 545-602 (QKKHEEDGGTTDTATILSNQHEKDSGVGRTDESTRNDESSEQENNGEDATASANPLAG). The span at 554–563 (TTDTATILSN) shows a compositional bias: polar residues. Over residues 564–582 (QHEKDSGVGRTDESTRNDE) the composition is skewed to basic and acidic residues. The stretch at 680–705 (ESVDKELELLNEELRSIELECLSIVR) forms a coiled coil. Over residues 746-755 (ELPEKSDKDS) the composition is skewed to basic and acidic residues. Disordered regions lie at residues 746-798 (ELPE…IEAY) and 834-853 (IKER…PKLG). Residues 756–770 (SSAYNTGESCRSTPL) show a composition bias toward polar residues.

In terms of assembly, interacts with NLGN1 and EFNB2. Interacts with UBE2D2 and with MUSK via the first PDZ domain. In myotubes, the interaction between PDZRN3 and MUSK is enhanced upon agrin stimulation. Post-translationally, auto-ubiquitinated. In terms of tissue distribution, highly expressed in skeletal and cardiac muscle and at lower levels in spinal cord and brain (at protein level). Also expressed in kidney and lung. In muscles, concentrated at the neuromuscular junction (NMJ).

Its subcellular location is the synapse. The protein localises to the cytoplasm. It catalyses the reaction S-ubiquitinyl-[E2 ubiquitin-conjugating enzyme]-L-cysteine + [acceptor protein]-L-lysine = [E2 ubiquitin-conjugating enzyme]-L-cysteine + N(6)-ubiquitinyl-[acceptor protein]-L-lysine.. The protein operates within protein modification; protein ubiquitination. Its function is as follows. E3 ubiquitin-protein ligase. Plays an important role in regulating the surface level of MUSK on myotubes. Mediates the ubiquitination of MUSK, promoting its endocytosis and lysosomal degradation. Might contribute to terminal myogenic differentiation. This chain is E3 ubiquitin-protein ligase PDZRN3 (Pdzrn3), found in Mus musculus (Mouse).